Here is a 364-residue protein sequence, read N- to C-terminus: Alanine racemase (364 aa).

Lys-35 acts as the Proton acceptor; specific for D-alanine in catalysis. Lys-35 carries the N6-(pyridoxal phosphate)lysine modification. Arg-132 contacts substrate. Tyr-260 acts as the Proton acceptor; specific for L-alanine in catalysis. Met-308 contributes to the substrate binding site.

This sequence belongs to the alanine racemase family. It depends on pyridoxal 5'-phosphate as a cofactor.

It carries out the reaction L-alanine = D-alanine. Its pathway is amino-acid biosynthesis; D-alanine biosynthesis; D-alanine from L-alanine: step 1/1. Catalyzes the interconversion of L-alanine and D-alanine. May also act on other amino acids. The chain is Alanine racemase (alr) from Acidithiobacillus ferrooxidans (strain ATCC 23270 / DSM 14882 / CIP 104768 / NCIMB 8455) (Ferrobacillus ferrooxidans (strain ATCC 23270)).